A 1118-amino-acid polypeptide reads, in one-letter code: Protein translocase subunit SecA (1118 aa).

ATP-binding positions include Q176, 194-198, and D693; that span reads GEGKT. The segment at 1034–1056 is disordered; that stretch reads QQPVQQPKYRETKDEAGSAFGGG.

The protein belongs to the SecA family. In terms of assembly, monomer and homodimer. Part of the essential Sec protein translocation apparatus which comprises SecA, SecYEG and auxiliary proteins SecDF. Other proteins may also be involved.

It localises to the cell inner membrane. Its subcellular location is the cytoplasm. The enzyme catalyses ATP + H2O + cellular proteinSide 1 = ADP + phosphate + cellular proteinSide 2.. In terms of biological role, part of the Sec protein translocase complex. Interacts with the SecYEG preprotein conducting channel. Has a central role in coupling the hydrolysis of ATP to the transfer of proteins into and across the cell membrane, serving as an ATP-driven molecular motor driving the stepwise translocation of polypeptide chains across the membrane. The sequence is that of Protein translocase subunit SecA from Cytophaga hutchinsonii (strain ATCC 33406 / DSM 1761 / CIP 103989 / NBRC 15051 / NCIMB 9469 / D465).